A 383-amino-acid chain; its full sequence is Deoxyguanosinetriphosphate triphosphohydrolase-like protein (383 aa).

In terms of domain architecture, HD spans 62–198 (RLTHSLEVST…AALADDISYI (137 aa)).

Belongs to the dGTPase family. Type 2 subfamily.

The chain is Deoxyguanosinetriphosphate triphosphohydrolase-like protein from Rickettsia felis (strain ATCC VR-1525 / URRWXCal2) (Rickettsia azadi).